The following is a 435-amino-acid chain: Tyrosine-protein phosphatase non-receptor type 1 (435 aa).

N-acetylmethionine is present on M1. A Tyrosine-protein phosphatase domain is found at 3-277 (MEKEFEQIDK…RFSYLAVIEG (275 aa)). Phosphotyrosine is present on Y20. The residue at position 50 (S50) is a Phosphoserine; by PKB/AKT1, CLK1 and CLK2. Phosphotyrosine; by EGFR is present on Y66. Substrate is bound by residues D181 and 215–221 (CSAGIGR). C215 serves as the catalytic Phosphocysteine intermediate. C215 bears the Cysteine persulfide; alternate mark. C215 bears the Cysteine sulfenic acid (-SOH); alternate mark. C215 carries the cysteine sulfinic acid (-SO2H); alternate modification. Residue C215 is modified to S-nitrosocysteine; in reversibly inhibited form. A cross-link (n,N-(cysteine-1,S-diyl)serine (Cys-Ser); in inhibited form) is located at residues 215–216 (CS). Phosphoserine; by CLK1 and CLK2 occurs at positions 242 and 243. A substrate-binding site is contributed by Q262. Residues 338–351 (TQEDKDCPIKEEKG) show a composition bias toward basic and acidic residues. The interval 338-359 (TQEDKDCPIKEEKGSPLNAAPY) is disordered. S352, S363, and S365 each carry phosphoserine. T368 carries the post-translational modification Phosphothreonine. Position 378 is a phosphoserine; by PKC (S378). A disordered region spans residues 378–398 (SLRGAQAASPAKGEPSLPEKD). S386 is modified (phosphoserine; by CDK1).

It belongs to the protein-tyrosine phosphatase family. Non-receptor class 1 subfamily. As to quaternary structure, interacts with EPHA3 (phosphorylated); dephosphorylates EPHA3 and may regulate its trafficking and function. Interacts with MET. Interacts with NCK1. Oxidized on Cys-215; the Cys-SOH formed in response to redox signaling reacts with the alpha-amido of the following residue to form a sulfenamide cross-link, triggering a conformational change that inhibits substrate binding and activity. The active site can be restored by reduction. In terms of processing, ser-50 is the major site of phosphorylation as compared to Ser-242 and Ser-243. Activated by phosphorylation at Ser-50. Post-translationally, S-nitrosylation of Cys-215 inactivates the enzyme activity. Sulfhydration at Cys-215 following endoplasmic reticulum stress inactivates the enzyme activity, promoting EIF2AK3/PERK activity. Expressed in keratinocytes (at protein level).

Its subcellular location is the endoplasmic reticulum membrane. It carries out the reaction O-phospho-L-tyrosyl-[protein] + H2O = L-tyrosyl-[protein] + phosphate. Tyrosine-protein phosphatase which acts as a regulator of endoplasmic reticulum unfolded protein response. Mediates dephosphorylation of EIF2AK3/PERK; inactivating the protein kinase activity of EIF2AK3/PERK. May play an important role in CKII- and p60c-src-induced signal transduction cascades. May regulate the EFNA5-EPHA3 signaling pathway which modulates cell reorganization and cell-cell repulsion. May also regulate the hepatocyte growth factor receptor signaling pathway through dephosphorylation of MET. This Homo sapiens (Human) protein is Tyrosine-protein phosphatase non-receptor type 1 (PTPN1).